We begin with the raw amino-acid sequence, 304 residues long: Taste receptor type 2 member 4 (304 aa).

The Extracellular portion of the chain corresponds to 1–10 (MLWELYAFVF). Residues 11-31 (AASVVFNFVGIVANLFIIVII) traverse the membrane as a helical segment. The Cytoplasmic segment spans residues 32 to 46 (SKTWVKSHKISSSDK). The helical transmembrane segment at 47–67 (ILFSLAITRFLTLGLFLLNTV) threads the bilayer. Residues 68–80 (YIATNTGRSVYFS) are Extracellular-facing. A helical membrane pass occupies residues 81–101 (TFFLLCWKFLDSNSLWLVTFL). The Cytoplasmic segment spans residues 102 to 128 (NCLYCVKITHFQHPVFLLLKRTVSMKT). Residues 129–149 (TSLLLACLLISAFTTLLYFVL) form a helical membrane-spanning segment. Residues 150–171 (TQISRFPEHIIGRNDTLFDVSD) are Extracellular-facing. Residue asparagine 163 is glycosylated (N-linked (GlcNAc...) asparagine). A helical transmembrane segment spans residues 172–192 (GILTLAASLILSSLLQFLLNV). Residues 193-229 (TFASLLIHSLRRHVQKMQRNRSSFWNPQTEAHVGAMR) lie on the Cytoplasmic side of the membrane. A helical membrane pass occupies residues 230-250 (LMICFLVLYIPYSIAALLYFP). The Extracellular portion of the chain corresponds to 251–260 (SYMRKNLRAQ). The chain crosses the membrane as a helical span at residues 261 to 281 (AACMIITAAYPPGHSILLIIT). The Cytoplasmic portion of the chain corresponds to 282–304 (HHKLKAKAKKICCFYKLRDFVSN).

The protein belongs to the G-protein coupled receptor T2R family. In terms of tissue distribution, expressed in tongue, stomach and duodenum.

The protein localises to the membrane. Its subcellular location is the cell projection. It localises to the cilium membrane. Functionally, gustducin-coupled receptor implicated in the perception of bitter compounds in the oral cavity and the gastrointestinal tract. Signals through PLCB2 and the calcium-regulated cation channel TRPM5. In airway epithelial cells, binding of denatonium increases the intracellular calcium ion concentration and stimulates ciliary beat frequency. The protein is Taste receptor type 2 member 4 of Rattus norvegicus (Rat).